An 883-amino-acid polypeptide reads, in one-letter code: Valine--tRNA ligase (883 aa).

Positions 52-62 (PNVTGRLHLGH) match the 'HIGH' region motif. Positions 529–533 (KMSKS) match the 'KMSKS' region motif. Lys532 provides a ligand contact to ATP. Positions 813–848 (LEGLIDFDKEIKRLENELAKWTKEVERVQKKLSNQG) form a coiled coil.

The protein belongs to the class-I aminoacyl-tRNA synthetase family. ValS type 1 subfamily. Monomer.

The protein resides in the cytoplasm. The catalysed reaction is tRNA(Val) + L-valine + ATP = L-valyl-tRNA(Val) + AMP + diphosphate. Its function is as follows. Catalyzes the attachment of valine to tRNA(Val). As ValRS can inadvertently accommodate and process structurally similar amino acids such as threonine, to avoid such errors, it has a 'posttransfer' editing activity that hydrolyzes mischarged Thr-tRNA(Val) in a tRNA-dependent manner. The sequence is that of Valine--tRNA ligase from Oceanobacillus iheyensis (strain DSM 14371 / CIP 107618 / JCM 11309 / KCTC 3954 / HTE831).